Reading from the N-terminus, the 583-residue chain is Nuclear distribution protein nudE homolog 1 (583 aa).

The stretch at 14 to 195 (ATLEDTLGWY…QDKFKKQESR (182 aa)) forms a coiled coil. Disordered regions lie at residues 34-68 (LAEFRDSSRELEQELEKDIERAEKQERHHQEKAET), 211-339 (TFDG…TSNS), and 358-583 (HSVR…GETY). Residues 35–67 (AEFRDSSRELEQELEKDIERAEKQERHHQEKAE) show a composition bias toward basic and acidic residues. 5 stretches are compositionally biased toward polar residues: residues 219 to 235 (PGSTASSPLITTPTDSK), 279 to 319 (RSRL…TMRT), 329 to 339 (SASNKLPTSNS), 379 to 392 (NVYSATNMPASITI), and 399 to 422 (SGSAASSVTGDDPTPTNIPTSTPK). A compositionally biased stretch (low complexity) spans 453 to 469 (RPSSRASTSYATSYARP). The segment covering 529-538 (RRGTYSSQGG) has biased composition (polar residues).

The protein belongs to the nudE family. In terms of assembly, self-associates. Interacts with PAC1.

It is found in the cytoplasm. Its subcellular location is the cytoskeleton. Functionally, required for nuclear migration. This Gibberella zeae (strain ATCC MYA-4620 / CBS 123657 / FGSC 9075 / NRRL 31084 / PH-1) (Wheat head blight fungus) protein is Nuclear distribution protein nudE homolog 1 (NDE1).